The chain runs to 218 residues: Thiopurine S-methyltransferase (218 aa).

Trp-10, Leu-45, Glu-66, and Arg-123 together coordinate S-adenosyl-L-methionine.

Belongs to the class I-like SAM-binding methyltransferase superfamily. TPMT family.

The protein localises to the cytoplasm. The catalysed reaction is S-adenosyl-L-methionine + a thiopurine = S-adenosyl-L-homocysteine + a thiopurine S-methylether.. The polypeptide is Thiopurine S-methyltransferase (Pseudomonas paraeruginosa (strain DSM 24068 / PA7) (Pseudomonas aeruginosa (strain PA7))).